A 105-amino-acid polypeptide reads, in one-letter code: MEMKNMGNMMKQMQKMQKQMMKAQEELKEKTVEATVGGGMVTVIASGDKRILEVNISEDVVDPDDVEMLQDLIIAATNEALKKVDELVEQDLGKFTKGLNMPGMF.

Over residues 1–22 (MEMKNMGNMMKQMQKMQKQMMK) the composition is skewed to low complexity. The interval 1–26 (MEMKNMGNMMKQMQKMQKQMMKAQEE) is disordered.

Belongs to the YbaB/EbfC family. In terms of assembly, homodimer.

The protein resides in the cytoplasm. The protein localises to the nucleoid. Binds to DNA and alters its conformation. May be involved in regulation of gene expression, nucleoid organization and DNA protection. This chain is Nucleoid-associated protein ABC0038, found in Shouchella clausii (strain KSM-K16) (Alkalihalobacillus clausii).